The chain runs to 1745 residues: Collagen alpha-3(V) chain (1745 aa).

Positions 1–29 (MGNRRDLGQPRAGLCLLLAALQLLPGTQA) are cleaved as a signal peptide. In terms of domain architecture, Laminin G-like spans 62–224 (DRAFRIGQAS…QACERYLPDC (163 aa)). 2 N-linked (GlcNAc...) asparagine glycosylation sites follow: Asn102 and Asn141. The nonhelical region stretch occupies residues 211 to 391 (QAAFQACERY…AVIEKGQQFE (181 aa)). 4 disordered regions span residues 230–304 (AATV…TPTP), 322–362 (RSLD…EYPS), 387–439 (GQQF…RGPP), and 476–1492 (SMKG…PAEL). The span at 244-267 (PRRKGKGKGRKKGRGRKGKGRKKN) shows a compositional bias: basic residues. Ser349 carries an O-linked (Xyl...) (chondroitin sulfate) serine glycan. Collagen-like domains lie at 391-440 (EGPP…GPPG) and 482-538 (GPVG…DGAR). The tract at residues 392 to 1489 (GPPGAPGPQG…AGPPGPPGAP (1098 aa)) is triple-helical region. The segment covering 406-424 (SGPPGPPGFPGDPGPPGPA) has biased composition (pro residues). Low complexity-rich tracts occupy residues 426-439 (LPGI…RGPP), 489-499 (RPGPVGLPGHP), and 597-619 (EPGP…PGVT). The span at 724 to 733 (QGEKGEKGED) shows a compositional bias: basic and acidic residues. Positions 765 to 792 (PKGQAGQAGEEGPPGSAGEKGKLGVPGL) are enriched in low complexity. Collagen-like domains lie at 824-877 (GQPG…QGPP), 905-950 (GFQG…GLPG), and 951-989 (LEGR…GDPG). Low complexity predominate over residues 967 to 979 (LGKEGPAGLRGFP). Residues 1016 to 1025 (GPAGGIGLPG) are compositionally biased toward gly residues. Composition is skewed to low complexity over residues 1116 to 1126 (ADGAQGRRGPP) and 1141 to 1152 (VGVIGPPGLQGL). Over residues 1190–1199 (GLPGGVGQPG) the composition is skewed to gly residues. Residues 1213-1222 (PGPPGAPGIP) show a composition bias toward pro residues. Positions 1234 to 1243 (SGPSGAAGPP) are enriched in low complexity. Positions 1318–1330 (MGREGREGEKGAK) are enriched in basic and acidic residues. The segment covering 1405–1416 (IGLIGLIGPPGE) has biased composition (low complexity). Residues 1429–1443 (QGPPGPKGDPGPPGP) are compositionally biased toward pro residues. In terms of domain architecture, Collagen-like 6 spans 1430–1488 (GPPGPKGDPGPPGPIGSLGHPGPPGVAGPLGQKGSKGSPGSMGPRGDTGPAGPPGPPGA). A compositionally biased stretch (low complexity) spans 1458 to 1479 (PLGQKGSKGSPGSMGPRGDTGP). One can recognise a Fibrillar collagen NC1 domain in the interval 1514 to 1744 (EEVLASLTSL…GFELGPVCFS (231 aa)). 2 disulfides stabilise this stretch: Cys1585–Cys1742 and Cys1651–Cys1696.

The protein belongs to the fibrillar collagen family. As to quaternary structure, trimers of two alpha 1(V) and one alpha 2(V) chains in most tissues and trimers of one alpha 1(V), one alpha 2(V), and one alpha 3(V) chains in placenta. Post-translationally, prolines at the third position of the tripeptide repeating unit (G-X-Y) are hydroxylated in some or all of the chains. In terms of tissue distribution, detected in fibroblasts (at protein level). Detected in urine (at protein level).

The protein localises to the secreted. It localises to the extracellular space. Its subcellular location is the extracellular matrix. Type V collagen is a member of group I collagen (fibrillar forming collagen). It is a minor connective tissue component of nearly ubiquitous distribution. Type V collagen binds to DNA, heparan sulfate, thrombospondin, heparin, and insulin. The polypeptide is Collagen alpha-3(V) chain (COL5A3) (Homo sapiens (Human)).